A 405-amino-acid polypeptide reads, in one-letter code: Type III polyketide synthase 10 (405 aa).

Polar residues predominate over residues 1 to 18 (MVSTNAGGIASKQASSMA). The interval 1–20 (MVSTNAGGIASKQASSMAPN) is disordered. Catalysis depends on Cys170, which acts as the Nucleophile.

The protein belongs to the thiolase-like superfamily. Chalcone/stilbene synthases family. In terms of assembly, interacts with STS1. As to expression, expressed in adult flowers.

Its subcellular location is the endoplasmic reticulum. Its function is as follows. Plant type III polyketide synthases (PKSs) that catalyzes the condensation of fatty acyl-CoA with malonyl-CoA to generate triketide and tetraketide alpha-pyrones, the main components of pollen exine and potential sporopollenin precursors. May be involved in the synthesis of sporopollenin precursors in tapetal cells to regulate pollen wall formation. Required for exine and Ubisch body formation in anthers. Does not possess chalcone synthase (CHS) activity in vitro with the substrates 4-coumaroyl-CoA and malonyl-CoA. This Oryza sativa subsp. japonica (Rice) protein is Type III polyketide synthase 10.